The chain runs to 282 residues: Rhomboid protease GlpG (282 aa).

A run of 6 helical transmembrane segments spans residues 96–116 (AGPL…WMQF), 144–164 (GLLH…WYLG), 176–196 (LFVI…LFSG), 197–217 (SHFG…WLTG), 225–242 (IGVP…LIVG), and 247–269 (FGLS…MALW). Serine 203 serves as the catalytic Nucleophile. Histidine 256 is a catalytic residue.

Belongs to the peptidase S54 family.

It is found in the cell inner membrane. It catalyses the reaction Cleaves type-1 transmembrane domains using a catalytic dyad composed of serine and histidine that are contributed by different transmembrane domains.. Its function is as follows. Rhomboid-type serine protease that catalyzes intramembrane proteolysis. The protein is Rhomboid protease GlpG of Photorhabdus laumondii subsp. laumondii (strain DSM 15139 / CIP 105565 / TT01) (Photorhabdus luminescens subsp. laumondii).